The primary structure comprises 525 residues: MQLTGEMLIGAEAVAGSAGTLRAFDPSKGEPIDAPVFGVAAQADVERACELARDAFDAYRAQPLAARAAFLEAIADEIVALGDALIERAHAETGLPVARLQGERGRTVGQLRLFARVVRDGRFLAASIDPAQPARTPLPRSDLRLQKVGLGPVVVFGASNFPLAFSVAGGDTASALAAGCPVIVKAHEAHLGTSELVGRAIRAAVAKTGMPAGVFSLLVGPGRVIGGALVSHPAVQAVGFTGSRQGGMALVQIANARPQPIPVYAEMSSINPVVLFPAALAARGDAIATGFVDSLTLGVGQFCTNPGLVLAIDGPDLDRFETVAAQALAKKPAGVMLTQGIADAYRNGRGKLAELPGVREIGAGEAAQTDCQAGGALYEVGAQAFLAEPAFSHEVFGPASLIVRCRDLDEVARVLEALEGQLTATLQMDADDKPLARRLLPVLERKAGRLLVNGYPTGVEVCDAMVHGGPFPATSNPAVTSVGATAIERFLRPVCYQDFPDDLLPEGLQESNPLAIPRLRDGKAE.

NAD(+) is bound by residues Lys185, Glu188, and 242-247; that span reads GSRQGG. Glu266 (proton acceptor) is an active-site residue. Cys303 (nucleophile) is an active-site residue. Glu394 provides a ligand contact to NAD(+).

Belongs to the aldehyde dehydrogenase family. In terms of assembly, homodimer.

The enzyme catalyses 2,5-dioxopentanoate + NADP(+) + H2O = 2-oxoglutarate + NADPH + 2 H(+). It catalyses the reaction 2,5-dioxopentanoate + NAD(+) + H2O = 2-oxoglutarate + NADH + 2 H(+). The protein operates within carbohydrate acid metabolism; D-glucarate degradation. Its pathway is carbohydrate acid metabolism; galactarate degradation. In terms of biological role, catalyzes the NAD(P)(+)-dependent oxidation of alpha-ketoglutaric semialdehyde (alphaKGSA) to alpha-ketoglutarate. Involved in D-glucarate/D-galactarate metabolism. Prefers NAD(+) to NADP(+) as a cosubstrate. This is Alpha-ketoglutaric semialdehyde dehydrogenase 2 from Azospirillum brasilense.